The chain runs to 197 residues: ATP-dependent Clp protease proteolytic subunit (197 aa).

Ser-98 functions as the Nucleophile in the catalytic mechanism. Residue His-123 is part of the active site.

The protein belongs to the peptidase S14 family. As to quaternary structure, fourteen ClpP subunits assemble into 2 heptameric rings which stack back to back to give a disk-like structure with a central cavity, resembling the structure of eukaryotic proteasomes.

Its subcellular location is the cytoplasm. The catalysed reaction is Hydrolysis of proteins to small peptides in the presence of ATP and magnesium. alpha-casein is the usual test substrate. In the absence of ATP, only oligopeptides shorter than five residues are hydrolyzed (such as succinyl-Leu-Tyr-|-NHMec, and Leu-Tyr-Leu-|-Tyr-Trp, in which cleavage of the -Tyr-|-Leu- and -Tyr-|-Trp bonds also occurs).. Functionally, cleaves peptides in various proteins in a process that requires ATP hydrolysis. Has a chymotrypsin-like activity. Plays a major role in the degradation of misfolded proteins. The sequence is that of ATP-dependent Clp protease proteolytic subunit from Lysinibacillus sphaericus (strain C3-41).